A 55-amino-acid chain; its full sequence is Large ribosomal subunit protein bL33 (55 aa).

The protein belongs to the bacterial ribosomal protein bL33 family.

In Beijerinckia indica subsp. indica (strain ATCC 9039 / DSM 1715 / NCIMB 8712), this protein is Large ribosomal subunit protein bL33.